A 222-amino-acid polypeptide reads, in one-letter code: Nucleoside triphosphate pyrophosphatase (222 aa).

Residue aspartate 82 is the Proton acceptor of the active site.

It belongs to the Maf family. It depends on a divalent metal cation as a cofactor.

It is found in the cytoplasm. The catalysed reaction is a ribonucleoside 5'-triphosphate + H2O = a ribonucleoside 5'-phosphate + diphosphate + H(+). It carries out the reaction a 2'-deoxyribonucleoside 5'-triphosphate + H2O = a 2'-deoxyribonucleoside 5'-phosphate + diphosphate + H(+). Functionally, nucleoside triphosphate pyrophosphatase. May have a dual role in cell division arrest and in preventing the incorporation of modified nucleotides into cellular nucleic acids. In Mycobacterium tuberculosis (strain ATCC 25177 / H37Ra), this protein is Nucleoside triphosphate pyrophosphatase.